The following is a 538-amino-acid chain: Atos homolog protein B (538 aa).

3 disordered regions span residues 1-99 (MRHV…PSTV), 165-185 (QGGQGCLGETPGPAPSGQLHT), and 199-270 (KSPV…GTLG). The segment covering 227-238 (HTPPGPGPPGPC) has biased composition (pro residues). S254 and S255 each carry phosphoserine. A required for macropage invasion region spans residues 348-430 (LLGNFEESLL…VPKVGTIQVT (83 aa)). A transactivation domain 1 (TAD1) region spans residues 436–444 (QTVVKMFLV).

Belongs to the ATOS family.

The protein localises to the nucleus. Functionally, transcription regulator that syncronizes transcriptional and translational programs to promote macrophage invasion of tissues. The polypeptide is Atos homolog protein B (Mus musculus (Mouse)).